The sequence spans 315 residues: Protein MFI (315 aa).

As to quaternary structure, can homodimerize. Interacts with MFF; the interaction inhibits MFF interaction with DNM1L. As to expression, enriched in the pancreatic beta cell and the testis and is expressed at low levels in other tissues tested.

It localises to the cytoplasm. The protein localises to the cytosol. It is found in the mitochondrion outer membrane. Its function is as follows. Acts as an inhibitor of mitochondrial fission. Interacts with MFF and prevents DNM1L recruitment to mitochondria, promoting a more fused mitochondrial network. The protein is Protein MFI of Mus musculus (Mouse).